Reading from the N-terminus, the 397-residue chain is Lysophospholipid transporter LplT (397 aa).

The next 11 membrane-spanning stretches (helical) occupy residues 16–36 (MLAV…LLFA), 53–73 (VLQM…GQFA), 91–111 (LGAG…LVGI), 139–159 (LMES…GILA), 164–184 (LAAL…NLWI), 227–247 (LFWG…PVAL), 253–273 (AMPT…AGAA), 281–301 (TVSR…AFAV), 305–325 (LLPA…FIVP), 352–372 (NVAM…GVPP), and 373–393 (VAVG…LWVW).

The protein belongs to the major facilitator superfamily. LplT (TC 2.A.1.42) family.

It localises to the cell inner membrane. In terms of biological role, catalyzes the facilitated diffusion of 2-acyl-glycero-3-phosphoethanolamine (2-acyl-GPE) into the cell. The sequence is that of Lysophospholipid transporter LplT from Klebsiella pneumoniae (strain 342).